The sequence spans 155 residues: FUN14 domain-containing protein 1 (155 aa).

Residues 1–47 (MATRNPPPQEYESDDDSYEVLDLTEYARRHHWWNRVFGHSSGPMVEK) are Cytoplasmic-facing. 2 positions are modified to phosphoserine: serine 13 and serine 17. A Phosphotyrosine; by SRC modification is found at tyrosine 18. Residues 18–21 (YEVL) carry the YXXL motif. A helical membrane pass occupies residues 48–68 (YSVATQIVMGGVSGWCAGFLF). The Mitochondrial intermembrane segment spans residues 69-74 (QKVGKL). Residues 75-95 (AATAVGGGFLLLQIASHSGYV) form a helical membrane-spanning segment. Over 96–133 (QIDWKRVEKDVNKAKRQIKKRANKAAPEINNIIEEATE) the chain is Cytoplasmic. Lysine 119 participates in a covalent cross-link: Glycyl lysine isopeptide (Lys-Gly) (interchain with G-Cter in ubiquitin). Residues 134–154 (FVKQNIVISSGFVGGFLLGLA) form a helical membrane-spanning segment. Residue serine 155 is a topological domain, mitochondrial intermembrane.

This sequence belongs to the FUN14 family. Interacts (via YXXL motif) with MAP1 LC3 family proteins MAP1LC3A, MAP1LC3B and GABARAP. Interacts with DNM1L/DPR1. Interacts with GPX4. Post-translationally, phosphorylation at Ser-13 by CK2 and at Tyr-18 by SRC inhibits activation of mitophagy. Following hypoxia, dephosphorylated at Tyr-18, leading to interaction with MAP1 LC3 family proteins and triggering mitophagy. Dephosphorylation is mediated by PGAM5. Phosphorylated by ULK1 at Ser-17 which enhances FUNDC1 binding to LC3. In terms of processing, ubiquitinated on Lys-119. Deubiquitinated by USP19; leading to hypoxia-induced DRP1 oligomerization and GTPase activity.

Its subcellular location is the mitochondrion outer membrane. Integral mitochondrial outer-membrane protein that mediates the formation of mitochondria-associated endoplasmic reticulum membranes (MAMs). In turn, mediates angiogenesis and neoangiogenesis through interference with intracellular Ca(2+) communication and regulation of the vascular endothelial growth factor receptor KDR/VEGFR2 expression at both mRNA and protein levels. Also acts as an activator of hypoxia-induced mitophagy, an important mechanism for mitochondrial quality and homeostasis, by interacting with and recruiting LC3 protein family to mitochondria. Mechanistically, recruits DRP1 at ER-mitochondria contact sites leading to DRP1 oligomerization and GTPase activity to facilitate mitochondrial fission during hypoxia. Additionally, plays a role in hepatic ferroptosis by interacting directly with glutathione peroxidase/GPX4 to facilitate its recruitment into mitochondria through TOM/TIM complex where it is degraded by mitophagy. The protein is FUN14 domain-containing protein 1 (FUNDC1) of Bos taurus (Bovine).